The primary structure comprises 148 residues: Caltractin (148 aa).

4 consecutive EF-hand domains span residues 4–39 (EQKQ…LGFE), 40–75 (PKKE…KMGE), 77–112 (DSRE…LGEN), and 113–148 (LTDE…TSLF). Ca(2+)-binding residues include Asp17, Asp19, Ser21, Thr23, Glu28, Asp53, Asp55, Ser57, Thr59, and Glu64. The Ca(2+) site is built by Asp126, Asp128, Asp130, Glu132, and Glu137.

It belongs to the centrin family. Ubiquitous.

In terms of biological role, this calcium-binding protein is found in the basal body complexes (the functional homolog of the centrosome in animal cell). In mitotic cells it is specifically associated with the poles of the mitotic spindles at the sites of the duplicated basal body complexes. This Spermatozopsis similis (Green alga) protein is Caltractin.